Reading from the N-terminus, the 239-residue chain is Orotidine 5'-phosphate decarboxylase (239 aa).

Substrate contacts are provided by residues D11, K33, 60–69 (DLKLHDIPTT), T123, R185, Q194, G214, and R215. The active-site Proton donor is K62.

Belongs to the OMP decarboxylase family. Type 1 subfamily. As to quaternary structure, homodimer.

The catalysed reaction is orotidine 5'-phosphate + H(+) = UMP + CO2. It participates in pyrimidine metabolism; UMP biosynthesis via de novo pathway; UMP from orotate: step 2/2. Catalyzes the decarboxylation of orotidine 5'-monophosphate (OMP) to uridine 5'-monophosphate (UMP). In Bacillus subtilis (strain 168), this protein is Orotidine 5'-phosphate decarboxylase (pyrF).